The sequence spans 531 residues: CCA tRNA nucleotidyltransferase, mitochondrial (531 aa).

It belongs to the tRNA nucleotidyltransferase/poly(A) polymerase family.

The protein resides in the mitochondrion. It localises to the cytoplasm. Its subcellular location is the nucleus. It catalyses the reaction a tRNA precursor + 2 CTP + ATP = a tRNA with a 3' CCA end + 3 diphosphate. Its function is as follows. Nucleotidyltransferase that catalyzes the addition and repair of the essential 3'-terminal CCA sequence in tRNAs, which is necessary for the attachment of amino acids to the 3' terminus of tRNA molecules, using CTP and ATP as substrates. tRNA 3'-terminal CCA addition is required both for tRNA processing and repair. Also involved in tRNA surveillance by mediating tandem CCA addition to generate a CCACCA at the 3' terminus of unstable tRNAs. While stable tRNAs receive only 3'-terminal CCA, unstable tRNAs are marked with CCACCA and rapidly degraded. The structural flexibility of RNA controls the choice between CCA versus CCACCA addition: following the first CCA addition cycle, nucleotide-binding to the active site triggers a clockwise screw motion, producing torque on the RNA. This ejects stable RNAs, whereas unstable RNAs are refolded while bound to the enzyme and subjected to a second CCA catalytic cycle. The chain is CCA tRNA nucleotidyltransferase, mitochondrial (CCA1) from Candida glabrata (strain ATCC 2001 / BCRC 20586 / JCM 3761 / NBRC 0622 / NRRL Y-65 / CBS 138) (Yeast).